Reading from the N-terminus, the 145-residue chain is Large ribosomal subunit protein uL13 (145 aa).

The protein belongs to the universal ribosomal protein uL13 family. Part of the 50S ribosomal subunit.

This protein is one of the early assembly proteins of the 50S ribosomal subunit, although it is not seen to bind rRNA by itself. It is important during the early stages of 50S assembly. The chain is Large ribosomal subunit protein uL13 from Bacillus pumilus (strain SAFR-032).